The primary structure comprises 1465 residues: DNA polymerase alpha catalytic subunit (1465 aa).

Disordered regions lie at residues 20–39 and 105–135; these read GSFA…GRQE and LEDD…PSVT. Over residues 26–35 the composition is skewed to basic residues; the sequence is RARREKKSKK. Thr-180 carries the post-translational modification Phosphothreonine. Residues Ser-192 and Ser-215 each carry the phosphoserine modification. An N6-acetyllysine modification is found at Lys-230. Residues 261–297 are disordered; sequence DESMDTEKVDEKPVTAKTWDQETEPVERVEHEADPER. Composition is skewed to basic and acidic residues over residues 265–274 and 285–297; these read DTEKVDEKPV and PVER…DPER. A DNA-binding region spans residues 654–719; sequence RINECKVPYW…YHLSELVQQI (66 aa). N6-succinyllysine is present on Lys-974. The segment at 1249 to 1380 is DNA-binding; sequence QFRVHQYHKD…NGPLCPVCMK (132 aa). The Zn(2+) site is built by Cys-1287, Cys-1290, Cys-1314, Cys-1319, Cys-1352, Cys-1357, Cys-1375, and Cys-1378. Residues 1287–1317 form a CysA-type zinc finger; the sequence is CPSCGTENIYDNVFEGSGLDMEPSLYRCSNV. Residues 1352–1378 carry the CysB motif motif; that stretch reads CEEPTCCSRLRRLPLHFSRNGPLCPVC.

The protein belongs to the DNA polymerase type-B family. Component of the alpha DNA polymerase complex (also known as the alpha DNA polymerase-primase complex) consisting of four subunits: the catalytic subunit POLA1, the regulatory subunit POLA2, and the primase complex subunits PRIM1 and PRIM2 respectively. Within the complex, POLA1 directly interacts with PRIM2. Interacts with PARP1; this interaction functions as part of the control of replication fork progression. Interacts with MCM10 and WDHD1; these interactions recruit the polymerase alpha complex to the pre-replicative complex bound to DNA. Interacts with RPA1; this interaction stabilizes the replicative complex and reduces the misincorporation rate of DNA polymerase alpha by acting as a fidelity clamp. As to expression, expressed in those zones containing proliferating cells in the developing embryonic neocortex, as well as in the lateral and medial ganglionic eminences. After birth, expressed in cells that remain proliferating in the ventricular and subventricular zone of the striatum.

It localises to the nucleus. The protein localises to the cytoplasm. It is found in the cytosol. The enzyme catalyses DNA(n) + a 2'-deoxyribonucleoside 5'-triphosphate = DNA(n+1) + diphosphate. In terms of biological role, catalytic subunit of the DNA polymerase alpha complex (also known as the alpha DNA polymerase-primase complex) which plays an essential role in the initiation of DNA synthesis. During the S phase of the cell cycle, the DNA polymerase alpha complex (composed of a catalytic subunit POLA1, a regulatory subunit POLA2 and two primase subunits PRIM1 and PRIM2) is recruited to DNA at the replicative forks via direct interactions with MCM10 and WDHD1. The primase subunit of the polymerase alpha complex initiates DNA synthesis by oligomerising short RNA primers on both leading and lagging strands. These primers are initially extended by the polymerase alpha catalytic subunit and subsequently transferred to polymerase delta and polymerase epsilon for processive synthesis on the lagging and leading strand, respectively. The reason this transfer occurs is because the polymerase alpha has limited processivity and lacks intrinsic 3' exonuclease activity for proofreading error, and therefore is not well suited for replicating long complexes. In the cytosol, responsible for a substantial proportion of the physiological concentration of cytosolic RNA:DNA hybrids, which are necessary to prevent spontaneous activation of type I interferon responses. The sequence is that of DNA polymerase alpha catalytic subunit (Pola1) from Mus musculus (Mouse).